Consider the following 861-residue polypeptide: Integrator complex subunit 6-like (861 aa).

The 225-residue stretch at 3-227 (ILLFLIDTSA…QCLESLVQKV (225 aa)) folds into the VWFA domain. A Phosphoserine modification is found at Ser-617.

The polypeptide is Integrator complex subunit 6-like (Ints6l) (Mus musculus (Mouse)).